A 639-amino-acid polypeptide reads, in one-letter code: Kininogen-1 (639 aa).

A signal peptide spans Met1–Ala18. The Cystatin kininogen-type 1 domain maps to Cys28 to Lys132. 9 disulfide bridges follow: Cys28–Cys609, Cys83–Cys94, Cys107–Cys126, Cys142–Cys145, Cys206–Cys218, Cys229–Cys248, Cys264–Cys267, Cys328–Cys340, and Cys351–Cys370. Asn82 carries an N-linked (GlcNAc...) asparagine glycan. A Cystatin kininogen-type 2 domain is found at Val151 to Asp254. Residues Asn169 and Asn205 are each glycosylated (N-linked (GlcNAc...) asparagine). Residues Val273–Thr376 form the Cystatin kininogen-type 3 domain. A glycan (N-linked (GlcNAc...) asparagine) is linked at Asn294. At Ser332 the chain carries Phosphoserine. 2 disordered regions span residues Asn438 to His462 and Gly476 to Pro547. Residues Pro482–Asp502 are compositionally biased toward basic residues. The segment covering Lys503–Arg519 has biased composition (basic and acidic residues). Positions Leu522–Gly537 are enriched in polar residues. Asn529 is a glycosylation site (N-linked (GlcNAc...) asparagine).

Post-translationally, bradykinin is released from kininogen by plasma kallikrein. Phosphorylated by FAM20C in the extracellular medium. In terms of processing, bradykinin is inactivated by ACE, which removes the dipeptide Arg-Phe from its C-terminus. As to expression, plasma.

The protein resides in the secreted. It localises to the extracellular space. Kininogens are inhibitors of thiol proteases. HMW-kininogen plays an important role in blood coagulation by helping to position optimally prekallikrein and factor XI next to factor XII; HMW-kininogen inhibits the thrombin- and plasmin-induced aggregation of thrombocytes. LMW-kininogen inhibits the aggregation of thrombocytes. LMW-kininogen is in contrast to HMW-kininogen not involved in blood clotting. Functionally, the active peptide bradykinin is a potent vasodilatator that is released from HMW-kininogen shows a variety of physiological effects: (A) influence in smooth muscle contraction, (B) induction of hypotension, (C) natriuresis and diuresis, (D) decrease in blood glucose level, (E) it is a mediator of inflammation and causes (E1) increase in vascular permeability, (E2) stimulation of nociceptors (4E3) release of other mediators of inflammation (e.g. prostaglandins), (F) it has a cardioprotective effect (directly via bradykinin action, indirectly via endothelium-derived relaxing factor action). In Rattus norvegicus (Rat), this protein is Kininogen-1 (Kng1).